A 172-amino-acid chain; its full sequence is Shikimate kinase (172 aa).

11 to 16 contributes to the ATP binding site; sequence GAGKST. S15 serves as a coordination point for Mg(2+). Residues D33, R57, and G79 each coordinate substrate. R117 is an ATP binding site. Position 136 (R136) interacts with substrate. An ATP-binding site is contributed by R153.

This sequence belongs to the shikimate kinase family. Monomer. The cofactor is Mg(2+).

Its subcellular location is the cytoplasm. It catalyses the reaction shikimate + ATP = 3-phosphoshikimate + ADP + H(+). It participates in metabolic intermediate biosynthesis; chorismate biosynthesis; chorismate from D-erythrose 4-phosphate and phosphoenolpyruvate: step 5/7. Its function is as follows. Catalyzes the specific phosphorylation of the 3-hydroxyl group of shikimic acid using ATP as a cosubstrate. The chain is Shikimate kinase from Pseudomonas syringae pv. syringae (strain B728a).